The chain runs to 396 residues: Elongation factor Tu (396 aa).

The tr-type G domain maps to K10–Q206. Residues G19–T26 are G1. G19–T26 contributes to the GTP binding site. T26 contributes to the Mg(2+) binding site. Residues G60–A64 are G2. The G3 stretch occupies residues D81–G84. Residues D81–H85 and N136–D139 each bind GTP. The G4 stretch occupies residues N136–D139. The segment at S174–L176 is G5.

The protein belongs to the TRAFAC class translation factor GTPase superfamily. Classic translation factor GTPase family. EF-Tu/EF-1A subfamily. As to quaternary structure, monomer.

The protein localises to the cytoplasm. It carries out the reaction GTP + H2O = GDP + phosphate + H(+). Functionally, GTP hydrolase that promotes the GTP-dependent binding of aminoacyl-tRNA to the A-site of ribosomes during protein biosynthesis. This Nitrosococcus oceani (strain ATCC 19707 / BCRC 17464 / JCM 30415 / NCIMB 11848 / C-107) protein is Elongation factor Tu.